The chain runs to 600 residues: Cytidine monophosphate-N-acetylneuraminic acid hydroxylase (600 aa).

A Rieske domain is found at 9–107 (LSPVEVASLK…VEMDENNRLL (99 aa)). [2Fe-2S] cluster-binding residues include C49, H51, C70, and H73.

Belongs to the CMP-Neu5Ac hydroxylase family. [2Fe-2S] cluster serves as cofactor.

Its subcellular location is the cytoplasm. It catalyses the reaction CMP-N-acetyl-beta-neuraminate + 2 Fe(II)-[cytochrome b5] + O2 + 2 H(+) = CMP-N-glycoloyl-beta-neuraminate + 2 Fe(III)-[cytochrome b5] + H2O. Its pathway is amino-sugar metabolism; N-acetylneuraminate metabolism. Functionally, sialic acids are components of carbohydrate chains of glycoconjugates and are involved in cell-cell recognition and cell-pathogen interactions. Catalyzes the conversion of CMP-N-acetylneuraminic acid (CMP-Neu5Ac) into its hydroxylated derivative CMP-N-glycolylneuraminic acid (CMP-Neu5Gc), a sialic acid abundantly expressed at the surface of many cells. The polypeptide is Cytidine monophosphate-N-acetylneuraminic acid hydroxylase (CMAH) (Pan paniscus (Pygmy chimpanzee)).